The chain runs to 273 residues: NADPH-dependent 7-cyano-7-deazaguanine reductase (273 aa).

Substrate is bound at residue 81 to 83 (VES). NADPH is bound at residue 83–84 (SK). Cys179 serves as the catalytic Thioimide intermediate. The active-site Proton donor is Asp186. Substrate is bound at residue 218 to 219 (AE). 247–248 (RG) lines the NADPH pocket.

It belongs to the GTP cyclohydrolase I family. QueF type 2 subfamily. Homodimer.

The protein resides in the cytoplasm. It catalyses the reaction 7-aminomethyl-7-carbaguanine + 2 NADP(+) = 7-cyano-7-deazaguanine + 2 NADPH + 3 H(+). It participates in tRNA modification; tRNA-queuosine biosynthesis. Functionally, catalyzes the NADPH-dependent reduction of 7-cyano-7-deazaguanine (preQ0) to 7-aminomethyl-7-deazaguanine (preQ1). This Rickettsia bellii (strain OSU 85-389) protein is NADPH-dependent 7-cyano-7-deazaguanine reductase.